Reading from the N-terminus, the 650-residue chain is Chaperone protein HtpG (650 aa).

An a; substrate-binding region spans residues Met-1–Arg-344. A b region spans residues Glu-345 to Arg-582. The tract at residues Leu-583–Ala-650 is c.

Belongs to the heat shock protein 90 family. Homodimer.

It localises to the cytoplasm. Functionally, molecular chaperone. Has ATPase activity. The sequence is that of Chaperone protein HtpG from Acidovorax sp. (strain JS42).